A 208-amino-acid chain; its full sequence is Uracil phosphoribosyltransferase (208 aa).

5-phospho-alpha-D-ribose 1-diphosphate contacts are provided by residues Arg78, Arg103, and 130-138 (DPMLATGGS). Uracil-binding positions include Ile193 and 198–200 (GDA). Asp199 provides a ligand contact to 5-phospho-alpha-D-ribose 1-diphosphate.

Belongs to the UPRTase family. Mg(2+) is required as a cofactor.

The catalysed reaction is UMP + diphosphate = 5-phospho-alpha-D-ribose 1-diphosphate + uracil. Its pathway is pyrimidine metabolism; UMP biosynthesis via salvage pathway; UMP from uracil: step 1/1. Its activity is regulated as follows. Allosterically activated by GTP. Its function is as follows. Catalyzes the conversion of uracil and 5-phospho-alpha-D-ribose 1-diphosphate (PRPP) to UMP and diphosphate. This is Uracil phosphoribosyltransferase from Aeromonas salmonicida (strain A449).